A 314-amino-acid chain; its full sequence is DNA-directed RNA polymerase subunit alpha (314 aa).

Residues 1-228 (MIEIEKPRIE…EHLNIFVGLT (228 aa)) are alpha N-terminal domain (alpha-NTD). The segment at 245-314 (KEKVLEMSIE…DLGLGLRKED (70 aa)) is alpha C-terminal domain (alpha-CTD).

This sequence belongs to the RNA polymerase alpha chain family. As to quaternary structure, homodimer. The RNAP catalytic core consists of 2 alpha, 1 beta, 1 beta' and 1 omega subunit. When a sigma factor is associated with the core the holoenzyme is formed, which can initiate transcription.

It catalyses the reaction RNA(n) + a ribonucleoside 5'-triphosphate = RNA(n+1) + diphosphate. DNA-dependent RNA polymerase catalyzes the transcription of DNA into RNA using the four ribonucleoside triphosphates as substrates. This is DNA-directed RNA polymerase subunit alpha from Staphylococcus saprophyticus subsp. saprophyticus (strain ATCC 15305 / DSM 20229 / NCIMB 8711 / NCTC 7292 / S-41).